Here is a 714-residue protein sequence, read N- to C-terminus: BBSome complex member bbs-2 (714 aa).

Coiled coils occupy residues Ile-332–Asp-361 and Met-597–Ala-627.

In terms of assembly, part of BBSome complex, that contains at least bbs-1, bbs-2, bbs-4, bbs-5, osm-12, bbs-8/ttc-8 and bbs-9. In terms of tissue distribution, expressed in ciliated cells including amphid and both inner and outer labial neurons of the head and in both phasmid neurons PHA and PHB in the tail at larval stages L1 and L2.

It is found in the cell projection. The protein resides in the cilium. The protein localises to the cytoplasm. Its subcellular location is the cytoskeleton. It localises to the cilium basal body. It is found in the cilium axoneme. In terms of biological role, component of the BBSome complex. The BBSome complex is thought to function as a coat complex required for sorting of specific membrane proteins to the primary cilia. The BBSome complex is required for ciliogenesis but is dispensable for centriolar satellite function. Required for proper BBSome complex assembly and its ciliary localization. Required for cilia biogenesis and both the assembly and movement of intraflagellar transport proteins along the ciliary axoneme. This Caenorhabditis elegans protein is BBSome complex member bbs-2.